We begin with the raw amino-acid sequence, 929 residues long: MTDYSKTVNLLESPFPMRGNLAKREPAWLKSWYEQKRYQKLREIAKGRPKFILHDGPPYANGDIHIGHAVNKILKDIIIRSKTQAGFDAPYVPGWDCHGLPIEVMVEKLHGKDMPKARFRELCREYAAEQIARQKKDFIRLGVLGDWDHPYLTMDFKTEADTVRMLGEIYKSGYLYRGAKPVQFCLDCGSSLAEAEVEYKDKISPAIDVAYLFKDTAALAAAFGLAGFEGKAFAVIWTTTPWTLPASQAVSAGADVVYQLIDTPKGKLVLAKDLAEDALKRYGFSDGIAILAETTGDKLENLHMNHPFLERDIPMLNGEHVTTDAGTGLVHTAPAHGLEDYAVCNKYGIELYNPVNAEGRYIGETPRVAGMRVWEANPVILQWLEETGNLLASSKIEHSYAHCWRHKTPLIYRATGQWFVGMDKAGADGKTLRDKAIKAVDDTEFFPSWGRARLEAMIEGRPDWVVSRQRYWGTPMTFFVHKETGELHPNSAELLEKVALKIEEKGIEAWFSLDKSELLSAEDCENYDKLSDTMDVWFDSGSTHYSVVKQREELEWPADLYLEGSDQHRGWFQSSMLTGCASSMGRAPYKQLLTHGFVVDGEGKKMSKSIGNVVAPQEVYNEFGADILRLWAASTDYSGELAISKEILKRVTESYRRIRNTLSFLFANLSDFNPIEDAVQQADMVEIDRYAVVLARQLQECLAGDYYPRYAFHFAVKDIVSFCSEDLGAFYLDILKDRLYTTKADSHARRSAQTALYHITRSLVLLIAPILCFTGEEAWDIIGGGEEDSVLFHTWHEFPTINEKTEAELVKKWTAIREAREAVTAAIEPLRADKTVGSSLQAEAEITAPEEMAGYLNALGEELRFALLVSKAEVKVGSELAVAAKASDGEKCERCWHYTRDVGAVAGYETVCKRCAENVGGEGETRHYA.

The short motif at 58-68 (PYANGDIHIGH) is the 'HIGH' region element. Glu563 contributes to the L-isoleucyl-5'-AMP binding site. Positions 605–609 (KMSKS) match the 'KMSKS' region motif. ATP is bound at residue Lys608. Zn(2+) is bound by residues Cys892, Cys895, Cys912, and Cys915.

This sequence belongs to the class-I aminoacyl-tRNA synthetase family. IleS type 1 subfamily. As to quaternary structure, monomer. Requires Zn(2+) as cofactor.

It is found in the cytoplasm. The catalysed reaction is tRNA(Ile) + L-isoleucine + ATP = L-isoleucyl-tRNA(Ile) + AMP + diphosphate. Its function is as follows. Catalyzes the attachment of isoleucine to tRNA(Ile). As IleRS can inadvertently accommodate and process structurally similar amino acids such as valine, to avoid such errors it has two additional distinct tRNA(Ile)-dependent editing activities. One activity is designated as 'pretransfer' editing and involves the hydrolysis of activated Val-AMP. The other activity is designated 'posttransfer' editing and involves deacylation of mischarged Val-tRNA(Ile). The protein is Isoleucine--tRNA ligase of Neisseria meningitidis serogroup B (strain ATCC BAA-335 / MC58).